Here is a 134-residue protein sequence, read N- to C-terminus: Transcription antitermination protein NusB (134 aa).

This sequence belongs to the NusB family.

In terms of biological role, involved in transcription antitermination. Required for transcription of ribosomal RNA (rRNA) genes. Binds specifically to the boxA antiterminator sequence of the ribosomal RNA (rrn) operons. This is Transcription antitermination protein NusB from Shewanella sp. (strain MR-4).